The sequence spans 272 residues: Ribonuclease 3 (272 aa).

The disordered stretch occupies residues 1-22 (MSLQFLRSEASDGAGETSDASS). Positions 31-162 (TATHLARLTG…LVGAIYLDQG (132 aa)) constitute an RNase III domain. Glu-75 is a binding site for Mg(2+). Residue Asp-79 is part of the active site. The Mg(2+) site is built by Asp-148 and Glu-151. The active site involves Glu-151. One can recognise a DRBM domain in the interval 189-258 (NYKSRLIEYT…AKEAMKRLES (70 aa)).

The protein belongs to the ribonuclease III family. Homodimer. Mg(2+) serves as cofactor.

The protein resides in the cytoplasm. It carries out the reaction Endonucleolytic cleavage to 5'-phosphomonoester.. In terms of biological role, digests double-stranded RNA. Involved in the processing of primary rRNA transcript to yield the immediate precursors to the large and small rRNAs (23S and 16S). Processes some mRNAs, and tRNAs when they are encoded in the rRNA operon. Processes pre-crRNA and tracrRNA of type II CRISPR loci if present in the organism. The chain is Ribonuclease 3 from Chlorobaculum tepidum (strain ATCC 49652 / DSM 12025 / NBRC 103806 / TLS) (Chlorobium tepidum).